A 252-amino-acid chain; its full sequence is Chitooligosaccharide deacetylase (252 aa).

Mg(2+) contacts are provided by His61 and His125.

The protein belongs to the YdjC deacetylase family. ChbG subfamily. As to quaternary structure, homodimer. Requires Mg(2+) as cofactor.

It is found in the cytoplasm. The catalysed reaction is N,N'-diacetylchitobiose + H2O = N-acetyl-beta-D-glucosaminyl-(1-&gt;4)-D-glucosamine + acetate. It carries out the reaction diacetylchitobiose-6'-phosphate + H2O = N'-monoacetylchitobiose-6'-phosphate + acetate. Its pathway is glycan degradation; chitin degradation. Functionally, involved in the degradation of chitin. ChbG is essential for growth on the acetylated chitooligosaccharides chitobiose and chitotriose but is dispensable for growth on cellobiose and chitosan dimer, the deacetylated form of chitobiose. Deacetylation of chitobiose-6-P and chitotriose-6-P is necessary for both the activation of the chb promoter by the regulatory protein ChbR and the hydrolysis of phosphorylated beta-glucosides by the phospho-beta-glucosidase ChbF. Catalyzes the removal of only one acetyl group from chitobiose-6-P to yield monoacetylchitobiose-6-P, the inducer of ChbR and the substrate of ChbF. The chain is Chitooligosaccharide deacetylase from Escherichia coli O45:K1 (strain S88 / ExPEC).